A 265-amino-acid chain; its full sequence is RWD domain-containing protein 3 (265 aa).

The RWD domain maps to 7–114 (EEVAALSAIY…WTQQNLNNLI (108 aa)).

The protein resides in the nucleus. It localises to the cytoplasm. Enhancer of SUMO conjugation. Increases SUMO conjugation to proteins by promoting the: binding of E1 and E2 enzymes, thioester linkage between SUMO and ube2i/ubc9 and transfer of SUMO to specific target proteins which include hif1a, pias, nfkbia, nr3c1 and top1. Has no effect on ubiquitination. The protein is RWD domain-containing protein 3 (rwdd3) of Xenopus tropicalis (Western clawed frog).